We begin with the raw amino-acid sequence, 339 residues long: Heat-inducible transcription repressor HrcA (339 aa).

This sequence belongs to the HrcA family.

Its function is as follows. Negative regulator of class I heat shock genes (grpE-dnaK-dnaJ and groELS operons). Prevents heat-shock induction of these operons. The polypeptide is Heat-inducible transcription repressor HrcA (Clostridium perfringens (strain SM101 / Type A)).